Reading from the N-terminus, the 375-residue chain is Beta sliding clamp (375 aa).

This sequence belongs to the beta sliding clamp family. Forms a ring-shaped head-to-tail homodimer around DNA which binds and tethers DNA polymerases and other proteins to the DNA. The DNA replisome complex has a single clamp-loading complex (3 tau and 1 each of delta, delta', psi and chi subunits) which binds 3 Pol III cores (1 core on the leading strand and 2 on the lagging strand) each with a beta sliding clamp dimer. Additional proteins in the replisome are other copies of gamma, psi and chi, Ssb, DNA helicase and RNA primase.

It is found in the cytoplasm. Confers DNA tethering and processivity to DNA polymerases and other proteins. Acts as a clamp, forming a ring around DNA (a reaction catalyzed by the clamp-loading complex) which diffuses in an ATP-independent manner freely and bidirectionally along dsDNA. Initially characterized for its ability to contact the catalytic subunit of DNA polymerase III (Pol III), a complex, multichain enzyme responsible for most of the replicative synthesis in bacteria; Pol III exhibits 3'-5' exonuclease proofreading activity. The beta chain is required for initiation of replication as well as for processivity of DNA replication. The sequence is that of Beta sliding clamp (dnaN) from Mycoplasma capricolum subsp. capricolum (strain California kid / ATCC 27343 / NCTC 10154).